The primary structure comprises 300 residues: 1D-myo-inositol 2-acetamido-2-deoxy-alpha-D-glucopyranoside deacetylase (300 aa).

Positions 13, 16, and 147 each coordinate Zn(2+).

It belongs to the MshB deacetylase family. Zn(2+) is required as a cofactor.

It carries out the reaction 1D-myo-inositol 2-acetamido-2-deoxy-alpha-D-glucopyranoside + H2O = 1D-myo-inositol 2-amino-2-deoxy-alpha-D-glucopyranoside + acetate. Its function is as follows. Catalyzes the deacetylation of 1D-myo-inositol 2-acetamido-2-deoxy-alpha-D-glucopyranoside (GlcNAc-Ins) in the mycothiol biosynthesis pathway. In Mycobacterium avium (strain 104), this protein is 1D-myo-inositol 2-acetamido-2-deoxy-alpha-D-glucopyranoside deacetylase.